Reading from the N-terminus, the 323-residue chain is Mortality factor 4-like protein 1 (323 aa).

The 51-residue stretch at 12–62 folds into the Tudor-knot domain; that stretch reads QEGERVLCFHGPLLYEAKCVKVAIKDKQVKYFIHHSGWNKNWDEWVPESRV. The segment at 76 to 143 is disordered; it reads LQKANQEQYA…RKKRARVDPT (68 aa). The interval 94 to 227 is sufficient for interaction with SIN3A; that stretch reads PGKKTSGLQQ…VAGIKEYFNV (134 aa). A Nuclear localization signal motif is present at residues 96–107; that stretch reads KKTSGLQQKNVD. Position 104 is an N6-acetyllysine (Lys-104). Residues 125–191 are interaction with RB1-1; it reads STSETPQPPR…FYLPAKKNVD (67 aa). The tract at residues 149–303 is sufficient for interaction with PHF12; sequence TFMNRVEVKV…FLKYLAKNSA (155 aa). One can recognise an MRG domain in the interval 152 to 323; it reads NRVEVKVKIP…APPEYHRKAV (172 aa). The tract at residues 284-305 is interaction with RB1-2; it reads LALLLNYLHDFLKYLAKNSATL.

As to quaternary structure, component of the NuA4 histone acetyltransferase complex which contains the catalytic subunit KAT5/TIP60 and the subunits EP400, TRRAP/PAF400, BRD8/SMAP, EPC1, DMAP1/DNMAP1, RUVBL1/TIP49, RUVBL2, ING3, actin, ACTL6A/BAF53A, MORF4L1/MRG15, MORF4L2/MRGX, MRGBP, YEATS4/GAS41, VPS72/YL1 and MEAF6. The NuA4 complex interacts with MYC and the adenovirus E1A protein. MORF4L1 may also participate in the formation of NuA4 related complexes which lack the KAT5/TIP60 catalytic subunit, but which include the SWI/SNF related protein SRCAP. Component of the mSin3A histone deacetylase complex, which includes SIN3A, HDAC2, ARID4B, MORF4L1, RBBP4/RbAp48, and RBBP7/RbAp46. May also interact with PHF12 and one or more as yet undefined members of the TLE (transducin-like enhancer of split) family of transcriptional repressors. Component of the SIN3B complex, which includes SIN3B, HDAC2 or HDAC1, PHF12 and MORF4L1. Interacts with RB1 and KAT8. Interacts with the N-terminus of MRFAP1. Found in a complex composed of MORF4L1, MRFAP1 and RB1. Interacts with the entire BRCA complex, which contains BRCA1, PALB2, BRCA2 and RAD51. Interacts with PALB2. Forms a complex with MSL1 and NUPR1.

Its subcellular location is the nucleus. Its function is as follows. Component of the NuA4 histone acetyltransferase (HAT) complex which is involved in transcriptional activation of select genes principally by acetylation of nucleosomal histones H4 and H2A. This modification may both alter nucleosome - DNA interactions and promote interaction of the modified histones with other proteins which positively regulate transcription. This complex may be required for the activation of transcriptional programs associated with oncogene and proto-oncogene mediated growth induction, tumor suppressor mediated growth arrest and replicative senescence, apoptosis, and DNA repair. The NuA4 complex ATPase and helicase activities seem to be, at least in part, contributed by the association of RUVBL1 and RUVBL2 with EP400. NuA4 may also play a direct role in DNA repair when directly recruited to sites of DNA damage. As part of the SIN3B complex represses transcription and counteracts the histone acetyltransferase activity of EP300 through the recognition H3K27ac marks by PHF12 and the activity of the histone deacetylase HDAC2. SIN3B complex is recruited downstream of the constitutively active genes transcriptional start sites through interaction with histones and mitigates histone acetylation and RNA polymerase II progression within transcribed regions contributing to the regulation of transcription. Required for homologous recombination repair (HRR) and resistance to mitomycin C (MMC). Involved in the localization of PALB2, BRCA2 and RAD51, but not BRCA1, to DNA-damage foci. The polypeptide is Mortality factor 4-like protein 1 (MORF4L1) (Pongo abelii (Sumatran orangutan)).